A 482-amino-acid chain; its full sequence is Adenylyltransferase and sulfurtransferase uba4 (482 aa).

Positions 33–57 (EGAALRAQSQKTASANATTGQRTKS) are disordered. Over residues 39 to 54 (AQSQKTASANATTGQR) the composition is skewed to polar residues. Residues glycine 98, aspartate 119, 126-130 (SNLHR), lysine 143, and 187-188 (DN) each bind ATP. The Zn(2+) site is built by cysteine 236 and cysteine 239. Cysteine 253 (glycyl thioester intermediate; for adenylyltransferase activity) is an active-site residue. Zn(2+)-binding residues include cysteine 315 and cysteine 318. A Rhodanese domain is found at 366–480 (AGAQRHIIDV…WREQVDPDWP (115 aa)). Catalysis depends on cysteine 435, which acts as the Cysteine persulfide intermediate; for sulfurtransferase activity.

In the N-terminal section; belongs to the HesA/MoeB/ThiF family. UBA4 subfamily. Requires Zn(2+) as cofactor.

It is found in the cytoplasm. The protein localises to the cytosol. The catalysed reaction is [molybdopterin-synthase sulfur-carrier protein]-C-terminal Gly-Gly + ATP + H(+) = [molybdopterin-synthase sulfur-carrier protein]-C-terminal Gly-Gly-AMP + diphosphate. The enzyme catalyses [molybdopterin-synthase sulfur-carrier protein]-C-terminal Gly-Gly-AMP + S-sulfanyl-L-cysteinyl-[cysteine desulfurase] + AH2 = [molybdopterin-synthase sulfur-carrier protein]-C-terminal-Gly-aminoethanethioate + L-cysteinyl-[cysteine desulfurase] + A + AMP + 2 H(+). The protein operates within tRNA modification; 5-methoxycarbonylmethyl-2-thiouridine-tRNA biosynthesis. Its pathway is cofactor biosynthesis; molybdopterin biosynthesis. Functionally, plays a central role in 2-thiolation of mcm(5)S(2)U at tRNA wobble positions of cytosolic tRNA(Lys), tRNA(Glu) and tRNA(Gln). Also essential during biosynthesis of the molybdenum cofactor. Acts by mediating the C-terminal thiocarboxylation of sulfur carriers urm1 and mocs2a. Its N-terminus first activates urm1 and mocs2a as acyl-adenylates (-COAMP), then the persulfide sulfur on the catalytic cysteine is transferred to urm1 and mocs2a to form thiocarboxylation (-COSH) of their C-terminus. The reaction probably involves hydrogen sulfide that is generated from the persulfide intermediate and that acts as a nucleophile towards urm1 and mocs2a. Subsequently, a transient disulfide bond is formed. Does not use thiosulfate as sulfur donor; nfs1 probably acting as a sulfur donor for thiocarboxylation reactions. The sequence is that of Adenylyltransferase and sulfurtransferase uba4 from Emericella nidulans (strain FGSC A4 / ATCC 38163 / CBS 112.46 / NRRL 194 / M139) (Aspergillus nidulans).